An 815-amino-acid chain; its full sequence is Kinesin heavy chain (815 aa).

Residues 11–329 (GVQVFCRIRP…LLFGARAKTI (319 aa)) enclose the Kinesin motor domain. 88 to 95 (GQTSSGKT) lines the ATP pocket. Coiled-coil stretches lie at residues 335-374 (INEELTAEEWKRRYEKEKEKNTRLAALLQAAALELSRWRA), 422-554 (PITD…LDEC), and 695-785 (PAQK…RMNA). Residues 788–815 (IVKPIRPGQVYTSPSAGMSQGAPNGSNA) are disordered. Residues 797-815 (VYTSPSAGMSQGAPNGSNA) show a composition bias toward polar residues.

It belongs to the TRAFAC class myosin-kinesin ATPase superfamily. Kinesin family. Kinesin subfamily. As to quaternary structure, oligomer composed of two heavy chains and two light chains.

The protein localises to the cytoplasm. It localises to the cytoskeleton. In terms of biological role, microtubule-dependent motor protein required for organelle transport. Plays a role in endosome transport. Required for the transport of mitochondria along the axon of motor neurons. Involved in the nuclear migration of hyp7 hypodermal precursor cells. Required for the formation of dendritic branches of PVD sensory neurons. In non-ciliated neurons such as the PVD and PHC neurons, required for the organization of minus-end out microtubules in dendrites. Also required for the minus-end out orientation of microtubules in dendrites of AQR gas-sensing neurons. Involved in the localization of unc-33 to neurites. Positively regulates cilium position and dendrite morphogenesis in the postembryonic AQR and PQR gas-sensing neurons. Plays a more prominent role in regulating dendrite morphogenesis in AQR than in PQR neurons. Plays a role in regulating the localization of grdn-1 to the distal dendrites of AQR sensory neurons. The chain is Kinesin heavy chain from Caenorhabditis elegans.